A 172-amino-acid polypeptide reads, in one-letter code: Shikimate kinase (172 aa).

14 to 19 (GAGKST) serves as a coordination point for ATP. Ser18 is a binding site for Mg(2+). Residues Asp36, Arg60, and Gly82 each contribute to the substrate site. Residue Arg120 participates in ATP binding. Arg140 lines the substrate pocket. An ATP-binding site is contributed by Gln157.

Belongs to the shikimate kinase family. Monomer. The cofactor is Mg(2+).

Its subcellular location is the cytoplasm. It catalyses the reaction shikimate + ATP = 3-phosphoshikimate + ADP + H(+). It functions in the pathway metabolic intermediate biosynthesis; chorismate biosynthesis; chorismate from D-erythrose 4-phosphate and phosphoenolpyruvate: step 5/7. Functionally, catalyzes the specific phosphorylation of the 3-hydroxyl group of shikimic acid using ATP as a cosubstrate. The sequence is that of Shikimate kinase from Aeromonas salmonicida (strain A449).